Here is a 262-residue protein sequence, read N- to C-terminus: Acyl-[acyl-carrier-protein]--UDP-N-acetylglucosamine O-acyltransferase (262 aa).

This sequence belongs to the transferase hexapeptide repeat family. LpxA subfamily. As to quaternary structure, homotrimer.

The protein localises to the cytoplasm. The catalysed reaction is a (3R)-hydroxyacyl-[ACP] + UDP-N-acetyl-alpha-D-glucosamine = a UDP-3-O-[(3R)-3-hydroxyacyl]-N-acetyl-alpha-D-glucosamine + holo-[ACP]. Its pathway is glycolipid biosynthesis; lipid IV(A) biosynthesis; lipid IV(A) from (3R)-3-hydroxytetradecanoyl-[acyl-carrier-protein] and UDP-N-acetyl-alpha-D-glucosamine: step 1/6. In terms of biological role, involved in the biosynthesis of lipid A, a phosphorylated glycolipid that anchors the lipopolysaccharide to the outer membrane of the cell. The sequence is that of Acyl-[acyl-carrier-protein]--UDP-N-acetylglucosamine O-acyltransferase from Paraburkholderia phymatum (strain DSM 17167 / CIP 108236 / LMG 21445 / STM815) (Burkholderia phymatum).